A 260-amino-acid chain; its full sequence is Thiazole synthase (260 aa).

Lysine 102 serves as the catalytic Schiff-base intermediate with DXP. Residues glycine 163, 189–190, and 211–212 contribute to the 1-deoxy-D-xylulose 5-phosphate site; these read AG and NT.

This sequence belongs to the ThiG family. As to quaternary structure, homotetramer. Forms heterodimers with either ThiH or ThiS.

The protein resides in the cytoplasm. The catalysed reaction is [ThiS sulfur-carrier protein]-C-terminal-Gly-aminoethanethioate + 2-iminoacetate + 1-deoxy-D-xylulose 5-phosphate = [ThiS sulfur-carrier protein]-C-terminal Gly-Gly + 2-[(2R,5Z)-2-carboxy-4-methylthiazol-5(2H)-ylidene]ethyl phosphate + 2 H2O + H(+). The protein operates within cofactor biosynthesis; thiamine diphosphate biosynthesis. Its function is as follows. Catalyzes the rearrangement of 1-deoxy-D-xylulose 5-phosphate (DXP) to produce the thiazole phosphate moiety of thiamine. Sulfur is provided by the thiocarboxylate moiety of the carrier protein ThiS. In vitro, sulfur can be provided by H(2)S. This chain is Thiazole synthase, found in Geobacter sp. (strain M21).